A 437-amino-acid polypeptide reads, in one-letter code: Glutamyl-tRNA reductase (437 aa).

Residues 49–52 (TCNR), Ser109, 114–116 (EGQ), and Gln120 contribute to the substrate site. Cys50 functions as the Nucleophile in the catalytic mechanism. Position 198-203 (198-203 (GAGRMS)) interacts with NADP(+).

Belongs to the glutamyl-tRNA reductase family. As to quaternary structure, homodimer.

It catalyses the reaction (S)-4-amino-5-oxopentanoate + tRNA(Glu) + NADP(+) = L-glutamyl-tRNA(Glu) + NADPH + H(+). The protein operates within porphyrin-containing compound metabolism; protoporphyrin-IX biosynthesis; 5-aminolevulinate from L-glutamyl-tRNA(Glu): step 1/2. It participates in porphyrin-containing compound metabolism; chlorophyll biosynthesis. Catalyzes the NADPH-dependent reduction of glutamyl-tRNA(Glu) to glutamate 1-semialdehyde (GSA). The protein is Glutamyl-tRNA reductase of Prochlorococcus marinus (strain SARG / CCMP1375 / SS120).